Here is a 442-residue protein sequence, read N- to C-terminus: MSDSAGGRAGLRRYPKLPVWVVEDHQEVLPFIYRAIGSKHLPASNISFLHFDSHPDLLIPVNMPADTVFDKETLFGELSIENWIMPAVYAGHFSHVIWFHPAWAQQIREGRHHFLVGKDTSTTTIRVTSTDHYFLSDGLYVPEDQLENQKPLQLDVIMVKPYKLCNNQEENDAVSSAKKPKLALEDSRNTASTNCDSSSEGLEKDTATQRSDQTCLEASCSCSSENQECQTAASTGEILETLKKGKAFVLDIDLDFFSVKNPFKEMFTQEEYKILQELYQFKKPGTNLTEEDLVDIVDTRIHQLEDLEATFADLCDGDDEETVQRWASNPGMESLVPLVQSLKKRMEVPDYEMVHQAGLTCDYSELPHHISTEQEIEYLIQSVHYLLKNLPNPTLVTIARSSLDDYCPSDQVDTIQEKVLNMLRALYGNLDLQVYAAESPPS.

Positions 175–208 (SSAKKPKLALEDSRNTASTNCDSSSEGLEKDTAT) are disordered. Positions 189-200 (NTASTNCDSSSE) are enriched in polar residues.

It belongs to the UPF0489 family.

In Pongo abelii (Sumatran orangutan), this protein is UPF0489 protein C5orf22 homolog.